The chain runs to 178 residues: Tetratricopeptide repeat protein 9C (178 aa).

TPR repeat units lie at residues 15-48 (ASSF…LRSL), 79-114 (ADCY…QPEN), and 115-148 (VKAL…APKD).

Belongs to the TTC9 family.

The polypeptide is Tetratricopeptide repeat protein 9C (ttc9c) (Xenopus tropicalis (Western clawed frog)).